The following is a 210-amino-acid chain: uncharacterized protein (210 aa).

A Fe2OG dioxygenase domain is found at 90-193 (KPDQIIVNEY…RISITFRNVI (104 aa)).

This is an uncharacterized protein from Acanthamoeba polyphaga (Amoeba).